The sequence spans 559 residues: Glycerol kinase (559 aa).

T20 contacts ADP. T20, S21, and S22 together coordinate ATP. T20 is a sn-glycerol 3-phosphate binding site. R24 provides a ligand contact to ADP. Sn-glycerol 3-phosphate-binding residues include R94, E95, and Y148. Residues R94, E95, and Y148 each contribute to the glycerol site. G252 is a beta-D-fructose 1,6-bisphosphate binding site. Residue D265 coordinates sn-glycerol 3-phosphate. 2 residues coordinate glycerol: D265 and Q266. Positions 287, 332, 433, and 437 each coordinate ADP. Residues T287, G332, and G433 each coordinate ATP. Residues 532-552 (IFCSLPLGFFIVSSMVMLIGA) form a helical membrane-spanning segment.

The protein belongs to the FGGY kinase family. As to expression, widely expressed in fetal and adult tissues. In terms of tissue distribution, the sole isoform expressed in adult liver and kidney.

It localises to the mitochondrion outer membrane. The protein localises to the nucleus. The protein resides in the cytoplasm. Its subcellular location is the cytosol. The catalysed reaction is glycerol + ATP = sn-glycerol 3-phosphate + ADP + H(+). It participates in polyol metabolism; glycerol degradation via glycerol kinase pathway; sn-glycerol 3-phosphate from glycerol: step 1/1. With respect to regulation, potassium and magnesium-dependent. In terms of biological role, kinase that plays a key role in glycerol metabolism, catalyzing its phosphorylation to produce sn-glycerol 3-phosphate. Sn-glycerol 3-phosphate is a crucial intermediate in various metabolic pathways, such as the synthesis of glycerolipids and triglycerides, glycogenesis, glycolysis and gluconeogenesis. In Homo sapiens (Human), this protein is Glycerol kinase.